The sequence spans 419 residues: Probable dual-specificity RNA methyltransferase RlmN (419 aa).

The disordered stretch occupies residues 1–21 (MTAESDSPDGPVSAGTGRPVR). Residue Glu-124 is the Proton acceptor of the active site. The 240-residue stretch at 130–369 (YPDRATVCVS…ATTVRDTRGR (240 aa)) folds into the Radical SAM core domain. Cys-137 and Cys-375 are disulfide-bonded. Positions 144, 148, and 151 each coordinate [4Fe-4S] cluster. S-adenosyl-L-methionine-binding positions include 199-200 (GE), Ser-233, 256-258 (SLH), and Asn-332. Cys-375 (S-methylcysteine intermediate) is an active-site residue. Positions 383–419 (AGRARRVESARPVESARPVGVAGAASGSPAHGSRVLR) are disordered. Residues 397 to 419 (SARPVGVAGAASGSPAHGSRVLR) show a composition bias toward low complexity.

The protein belongs to the radical SAM superfamily. RlmN family. The cofactor is [4Fe-4S] cluster.

It is found in the cytoplasm. It catalyses the reaction adenosine(2503) in 23S rRNA + 2 reduced [2Fe-2S]-[ferredoxin] + 2 S-adenosyl-L-methionine = 2-methyladenosine(2503) in 23S rRNA + 5'-deoxyadenosine + L-methionine + 2 oxidized [2Fe-2S]-[ferredoxin] + S-adenosyl-L-homocysteine. The enzyme catalyses adenosine(37) in tRNA + 2 reduced [2Fe-2S]-[ferredoxin] + 2 S-adenosyl-L-methionine = 2-methyladenosine(37) in tRNA + 5'-deoxyadenosine + L-methionine + 2 oxidized [2Fe-2S]-[ferredoxin] + S-adenosyl-L-homocysteine. Its function is as follows. Specifically methylates position 2 of adenine 2503 in 23S rRNA and position 2 of adenine 37 in tRNAs. This is Probable dual-specificity RNA methyltransferase RlmN from Frankia alni (strain DSM 45986 / CECT 9034 / ACN14a).